Here is a 227-residue protein sequence, read N- to C-terminus: Orotidine 5'-phosphate decarboxylase (227 aa).

Substrate contacts are provided by residues Asp-8, Lys-30, Asp-57–Thr-66, Thr-116, Arg-177, Gln-186, Gly-206, and Arg-207. The active-site Proton donor is the Lys-59.

This sequence belongs to the OMP decarboxylase family. Type 1 subfamily. In terms of assembly, homodimer.

It catalyses the reaction orotidine 5'-phosphate + H(+) = UMP + CO2. It functions in the pathway pyrimidine metabolism; UMP biosynthesis via de novo pathway; UMP from orotate: step 2/2. Functionally, catalyzes the decarboxylation of orotidine 5'-monophosphate (OMP) to uridine 5'-monophosphate (UMP). The protein is Orotidine 5'-phosphate decarboxylase of Acinetobacter baylyi (strain ATCC 33305 / BD413 / ADP1).